A 594-amino-acid polypeptide reads, in one-letter code: ATP-dependent zinc metalloprotease FtsH 1 (594 aa).

Topologically, residues 1–2 (MR) are cytoplasmic. A helical membrane pass occupies residues 3–23 (WWAGAALLLAALLFGRPAAAM). The Extracellular segment spans residues 24–92 (EAQPVAYSEF…RVEFVRPADP (69 aa)). The chain crosses the membrane as a helical span at residues 93–113 (IAFRTLLRFIPPLLILGAILW). At 114 to 594 (FTRRTAGGSG…ANSRGDEGNQ (481 aa)) the chain is on the cytoplasmic side. 186-193 (GPPGTGKT) serves as a coordination point for ATP. A Zn(2+)-binding site is contributed by His-408. Residue Glu-409 is part of the active site. Zn(2+) contacts are provided by His-412 and Asp-485.

This sequence in the central section; belongs to the AAA ATPase family. The protein in the C-terminal section; belongs to the peptidase M41 family. Homohexamer. Requires Zn(2+) as cofactor.

The protein localises to the cell membrane. Acts as a processive, ATP-dependent zinc metallopeptidase for both cytoplasmic and membrane proteins. Plays a role in the quality control of integral membrane proteins. The polypeptide is ATP-dependent zinc metalloprotease FtsH 1 (Symbiobacterium thermophilum (strain DSM 24528 / JCM 14929 / IAM 14863 / T)).